A 125-amino-acid polypeptide reads, in one-letter code: uncharacterized protein (125 aa).

Residues 96–113 (LFMMSIVSSYVCYITVLL) traverse the membrane as a helical segment.

It localises to the membrane. This is an uncharacterized protein from Saccharomyces cerevisiae (strain ATCC 204508 / S288c) (Baker's yeast).